A 147-amino-acid chain; its full sequence is Large ribosomal subunit protein bL21 (147 aa).

Residues 125 to 147 (EEVEAAPKAKKAAPKAKKEATKE) are disordered.

The protein belongs to the bacterial ribosomal protein bL21 family. Part of the 50S ribosomal subunit. Contacts protein L20.

This protein binds to 23S rRNA in the presence of protein L20. This Flavobacterium johnsoniae (strain ATCC 17061 / DSM 2064 / JCM 8514 / BCRC 14874 / CCUG 350202 / NBRC 14942 / NCIMB 11054 / UW101) (Cytophaga johnsonae) protein is Large ribosomal subunit protein bL21.